The chain runs to 213 residues: Histone H1.3 (213 aa).

An N-acetylserine modification is found at Ser-1. Residues 1-15 show a composition bias toward low complexity; the sequence is SEAPAETAAPAPAEK. The interval 1–41 is disordered; that stretch reads SEAPAETAAPAPAEKSPAKKKKAAKKPGAGAAKRKAAGPPV. N6-acetyllysine is present on Lys-15. 2 positions are modified to N6-(beta-hydroxybutyryl)lysine: Lys-35 and Lys-53. Residues 37-110 enclose the H15 domain; the sequence is AGPPVSELIT…GASGSFKLDK (74 aa). At Arg-55 the chain carries Citrulline. An N6-(beta-hydroxybutyryl)lysine mark is found at Lys-65, Lys-86, and Lys-91. A disordered region spans residues 92–213; the sequence is GTLVETKGTG…AKKTAAKKKK (122 aa). Position 105 is a phosphoserine (Ser-105). Lys-107 carries the N6-(beta-hydroxybutyryl)lysine modification. Positions 107-119 are enriched in basic and acidic residues; the sequence is KLDKKAASGEAKP. 3 stretches are compositionally biased toward basic residues: residues 120–131, 138–170, and 179–213; these read KPKKAGAAKPKK, KKPK…KVAK, and KSPK…KKKK.

This sequence belongs to the histone H1/H5 family. Post-translationally, H1 histones are progressively phosphorylated during the cell cycle, becoming maximally phosphorylated during late G2 phase and M phase, and being dephosphorylated sharply thereafter. In terms of processing, citrullination at Arg-55 (H1R54ci) by PADI4 takes place within the DNA-binding site of H1 and results in its displacement from chromatin and global chromatin decondensation, thereby promoting pluripotency and stem cell maintenance.

Its subcellular location is the nucleus. It is found in the chromosome. Histones H1 are necessary for the condensation of nucleosome chains into higher-order structures. The polypeptide is Histone H1.3 (Oryctolagus cuniculus (Rabbit)).